The sequence spans 180 residues: ATP-dependent protease subunit HslV (180 aa).

The active site involves threonine 8. Na(+) is bound by residues glycine 165, cysteine 168, and threonine 171.

This sequence belongs to the peptidase T1B family. HslV subfamily. In terms of assembly, a double ring-shaped homohexamer of HslV is capped on each side by a ring-shaped HslU homohexamer. The assembly of the HslU/HslV complex is dependent on binding of ATP.

It localises to the cytoplasm. It carries out the reaction ATP-dependent cleavage of peptide bonds with broad specificity.. Its activity is regulated as follows. Allosterically activated by HslU binding. Protease subunit of a proteasome-like degradation complex believed to be a general protein degrading machinery. The polypeptide is ATP-dependent protease subunit HslV (Halalkalibacterium halodurans (strain ATCC BAA-125 / DSM 18197 / FERM 7344 / JCM 9153 / C-125) (Bacillus halodurans)).